Consider the following 124-residue polypeptide: Small ribosomal subunit protein uS12 (124 aa).

A disordered region spans residues 1–23 (MATINQLVRKPRVRQKQKSNVPA). A 3-methylthioaspartic acid modification is found at Asp89. The segment at 103 to 124 (DTAGVGDRRQGRSKYGAKRPKG) is disordered. Over residues 113-124 (GRSKYGAKRPKG) the composition is skewed to basic residues.

The protein belongs to the universal ribosomal protein uS12 family. As to quaternary structure, part of the 30S ribosomal subunit. Contacts proteins S8 and S17. May interact with IF1 in the 30S initiation complex.

In terms of biological role, with S4 and S5 plays an important role in translational accuracy. Interacts with and stabilizes bases of the 16S rRNA that are involved in tRNA selection in the A site and with the mRNA backbone. Located at the interface of the 30S and 50S subunits, it traverses the body of the 30S subunit contacting proteins on the other side and probably holding the rRNA structure together. The combined cluster of proteins S8, S12 and S17 appears to hold together the shoulder and platform of the 30S subunit. The protein is Small ribosomal subunit protein uS12 of Nitrosococcus oceani (strain ATCC 19707 / BCRC 17464 / JCM 30415 / NCIMB 11848 / C-107).